The sequence spans 626 residues: Chaperone protein HtpG (626 aa).

The tract at residues 1–339 is a; substrate-binding; sequence MSTNQETRGF…SNDLPLNVSR (339 aa). Residues 340–555 are b; it reads EILQDNKVTA…NDQMTTQMAK (216 aa). The tract at residues 556 to 626 is c; it reads LFAAAGQPVP…FIKRVNNLLG (71 aa).

It belongs to the heat shock protein 90 family. As to quaternary structure, homodimer.

It is found in the cytoplasm. Molecular chaperone. Has ATPase activity. The polypeptide is Chaperone protein HtpG (Histophilus somni (strain 2336) (Haemophilus somnus)).